Here is a 167-residue protein sequence, read N- to C-terminus: Aphrodisin (167 aa).

The N-terminal stretch at 1–16 (MVKILLLALVFSLAHA) is a signal peptide. Q17 bears the Pyrrolidone carboxylic acid mark. 2 cysteine pairs are disulfide-bonded: C54-C58 and C73-C165. Residues N57 and N85 are each glycosylated (N-linked (GlcNAc...) asparagine).

It belongs to the calycin superfamily. Lipocalin family. In terms of tissue distribution, expressed in the vagina, uterus, and Bartholin's glands of female hamsters. Secreted in vaginal discharge.

It is found in the secreted. Acts as an aphrodisiac pheromone, reliably eliciting copulatory behavior from male hamster. This is Aphrodisin from Cricetus cricetus (Black-bellied hamster).